The primary structure comprises 367 residues: Phosphoribosylaminoimidazole-succinocarboxamide synthase (367 aa).

Belongs to the SAICAR synthetase family.

The enzyme catalyses 5-amino-1-(5-phospho-D-ribosyl)imidazole-4-carboxylate + L-aspartate + ATP = (2S)-2-[5-amino-1-(5-phospho-beta-D-ribosyl)imidazole-4-carboxamido]succinate + ADP + phosphate + 2 H(+). It functions in the pathway purine metabolism; IMP biosynthesis via de novo pathway; 5-amino-1-(5-phospho-D-ribosyl)imidazole-4-carboxamide from 5-amino-1-(5-phospho-D-ribosyl)imidazole-4-carboxylate: step 1/2. This Saccharophagus degradans (strain 2-40 / ATCC 43961 / DSM 17024) protein is Phosphoribosylaminoimidazole-succinocarboxamide synthase.